Consider the following 436-residue polypeptide: MVGFGANRRAGRLPSLVLVVLLVVIVVLAFNYWSISSRHVLLQEEVAELQGQVQRTEVARGRLEKRNSDLLLLVDTHKKQIDQKEADYGRLSSRLQAREGLGKRCEDDKVKLQNNISYQMADIHHLKEQLAELRQEFLRQEDQLQDYRKNNTYLVKRLEYESFQCGQQMKELRAQHEENIKKLADQFLEEQKQETQKIQSNDGKELDINNQVVPKNIPKVAENVADKNEEPSSNHIPHGKEQIKRGGDAGMPGIEENDLAKVDDLPPALRKPPISVSQHESHQAISHLPTGQPLSPNMPPDSHINHNGNPGTSKQNPSSPLQRLIPGSNLDSEPRIQTDILKQATKDRVSDFHKLKQSRFFDENESPVDPQHGSKLADYNGDDGNVGEYEADKQAELAYNEEEDGDGGEEDVQDDEERELQMDPADYGKQHFNDVL.

M1 is subject to N-acetylmethionine. At 1–14 (MVGFGANRRAGRLP) the chain is on the cytoplasmic side. The chain crosses the membrane as a helical; Signal-anchor for type II membrane protein span at residues 15 to 35 (SLVLVVLLVVIVVLAFNYWSI). Residues 35 to 198 (ISSRHVLLQE…EEQKQETQKI (164 aa)) adopt a coiled-coil conformation. The Lumenal portion of the chain corresponds to 36 to 436 (SSRHVLLQEE…YGKQHFNDVL (401 aa)). Basic and acidic residues predominate over residues 225 to 247 (ADKNEEPSSNHIPHGKEQIKRGG). The disordered stretch occupies residues 225 to 436 (ADKNEEPSSN…YGKQHFNDVL (212 aa)). Phosphoserine is present on residues S233 and S275. The span at 305–321 (NHNGNPGTSKQNPSSPL) shows a compositional bias: polar residues. A phosphoserine mark is found at S328 and S332. The segment covering 344–362 (ATKDRVSDFHKLKQSRFFD) has biased composition (basic and acidic residues). At S366 the chain carries Phosphoserine. The segment covering 399–418 (YNEEEDGDGGEEDVQDDEER) has biased composition (acidic residues). Over residues 426 to 436 (DYGKQHFNDVL) the composition is skewed to basic and acidic residues.

This sequence belongs to the GOLM family.

The protein localises to the membrane. In Homo sapiens (Human), this protein is Protein GOLM2.